Here is a 215-residue protein sequence, read N- to C-terminus: Calcium-binding protein 7 (215 aa).

The Cytoplasmic portion of the chain corresponds to Met1–Ser188. 2 EF-hand domains span residues Asp33 to Met68 and Pro69 to Thr104. Residues Asp46, Asp48, Asn50, Glu57, Asp82, Asp84, Asp86, Gln88, and Glu93 each coordinate Ca(2+). Residues Leu189–Val209 form a helical; Anchor for type IV membrane protein membrane-spanning segment. The Extracellular segment spans residues Leu210–Lys215.

Interacts with PI4KB. This binding competes with FREQ/NCS1 binding in a calcium-dependent manner.

It is found in the golgi apparatus. It localises to the trans-Golgi network membrane. Its subcellular location is the cytoplasm. The protein localises to the perinuclear region. The protein resides in the cell membrane. Functionally, negatively regulates Golgi-to-plasma membrane trafficking by interacting with PI4KB and inhibiting its activity. This chain is Calcium-binding protein 7 (CABP7), found in Homo sapiens (Human).